A 318-amino-acid polypeptide reads, in one-letter code: Polyprenal reductase (318 aa).

Topologically, residues 1–19 are cytoplasmic; sequence MAPWAAAQLWALNPLRALW. A helical membrane pass occupies residues 20–40; the sequence is LTLAAAFLLTLLLQLVPPGLL. Residues 41–80 are Lumenal-facing; sequence PGCALFQDLIRYGKTKREGQSRPAVCRVFDVPKRYFSHFY. The chain crosses the membrane as a helical span at residues 81–101; that stretch reads IISALWNGFLLWHLTQSVFLG. The Cytoplasmic portion of the chain corresponds to 102 to 119; that stretch reads VPFPNWLHGLLRILGASQ. The chain crosses the membrane as a helical span at residues 120-140; sequence FQGGELALSAFLVLVFLWLHS. Topologically, residues 141–156 are lumenal; it reads LRRLFECFYVSVFSNT. The helical transmembrane segment at 157–177 threads the bilayer; the sequence is VIHIVQYCFGLVYYVLTGLTV. Residues 178–194 lie on the Cytoplasmic side of the membrane; it reads LSQVPMDGRNAYVIGKN. Residues 195–215 form a helical membrane-spanning segment; the sequence is LLMQARWFHILGMLMFIWSSV. Residues 216 to 265 lie on the Lumenal side of the membrane; that stretch reads HQYKCHVILGNLRKNKAGVVIHCNHRIPFGDWFEYVSSPNYLAELMIYIS. Residues 266-286 form a helical membrane-spanning segment; it reads MAVTFGFHNLTWWLVVTYVFF. At 287–318 the chain is on the cytoplasmic side; the sequence is SQALSAFLSHKFYKSKFVSYPKHRKAFLPFLF.

Belongs to the steroid 5-alpha reductase family. Polyprenal reductase subfamily.

Its subcellular location is the endoplasmic reticulum membrane. It catalyses the reaction a di-trans,poly-cis-dolichal + NADP(+) = a di-trans,poly-cis-polyprenal + NADPH + H(+). The enzyme catalyses a 3-oxo-5alpha-steroid + NADP(+) = a 3-oxo-Delta(4)-steroid + NADPH + H(+). The catalysed reaction is androst-4-ene-3,17-dione + NADPH + H(+) = 5alpha-androstan-3,17-dione + NADP(+). It carries out the reaction 17beta-hydroxy-5alpha-androstan-3-one + NADP(+) = testosterone + NADPH + H(+). Its pathway is protein modification; protein glycosylation. Its function is as follows. Plays a key role in early steps of protein N-linked glycosylation by being involved in the conversion of polyprenol into dolichol. Acts as a polyprenal reductase that mediates the reduction of polyprenal into dolichal in a NADP-dependent mechanism. Dolichols are required for the synthesis of dolichol-linked monosaccharides and the oligosaccharide precursor used for N-glycosylation. Also able to convert testosterone (T) into 5-alpha-dihydrotestosterone (DHT). This is Polyprenal reductase (SRD5A3) from Ailuropoda melanoleuca (Giant panda).